The following is a 367-amino-acid chain: MKNLFLFCRAGYEKECAAEIQQRAAEMNVGGFVKTTNNDAYVIYQCFEDDGADTLAKMLPLNSLIFARQMFAASELHSDLPEQDRVGPLVASLLEADVTKCGELRVETPDTNEAKELSAFCRKFTVPLRQGLKKVGVLLDKENGRRPIIHVCFVGPGKAYVGYSLSNNSSPHFMGIPRLRMAADAPSRSSLKLDEAFGAFLTKEEQEMRCRSGLKAVDLGACPGGWTYQLVRRGMMVAAVDNGPMDEKLMETGQVKHYRADGFRFEPPRKNIYWLVCDMVEKPSRVAELMEAWAINGWFKEAIFNLKLPMKSRYKEVRVILDTMGEIFKENEIDYRLQCKHLYHDRDEVTVHLWIFPEKGVSYAEMG.

S-adenosyl-L-methionine contacts are provided by residues Ser189, 222–225 (CPGG), Asp241, Asp261, and Asp278. The active-site Proton acceptor is the Lys307.

It belongs to the class I-like SAM-binding methyltransferase superfamily. RNA methyltransferase RlmE family. RlmM subfamily. Monomer.

It is found in the cytoplasm. It catalyses the reaction cytidine(2498) in 23S rRNA + S-adenosyl-L-methionine = 2'-O-methylcytidine(2498) in 23S rRNA + S-adenosyl-L-homocysteine + H(+). Catalyzes the 2'-O-methylation at nucleotide C2498 in 23S rRNA. This is Ribosomal RNA large subunit methyltransferase M from Shewanella denitrificans (strain OS217 / ATCC BAA-1090 / DSM 15013).